The primary structure comprises 180 residues: Large ribosomal subunit protein uL6 (180 aa).

It belongs to the universal ribosomal protein uL6 family. In terms of assembly, part of the 50S ribosomal subunit.

Its function is as follows. This protein binds to the 23S rRNA, and is important in its secondary structure. It is located near the subunit interface in the base of the L7/L12 stalk, and near the tRNA binding site of the peptidyltransferase center. The polypeptide is Large ribosomal subunit protein uL6 (Borrelia duttonii (strain Ly)).